A 107-amino-acid chain; its full sequence is UPF0060 membrane protein Sala_0701 (107 aa).

Transmembrane regions (helical) follow at residues 4–24, 30–50, 60–80, and 87–107; these read FAYI…WAWL, VWWV…LTLV, AAYG…VEGA, and LIGA…PRGG.

Belongs to the UPF0060 family.

It is found in the cell inner membrane. In Sphingopyxis alaskensis (strain DSM 13593 / LMG 18877 / RB2256) (Sphingomonas alaskensis), this protein is UPF0060 membrane protein Sala_0701.